The primary structure comprises 372 residues: E3 ubiquitin-protein ligase RNF34 (372 aa).

The FYVE-type zinc finger occupies 56–107; the sequence is EGPNIVCKACGLSFSVFRKKHVCCDCKKDFCSVCSVLQENLRRCSTCHLLQE. The 20-residue stretch at 115–134 folds into the SAP 1 domain; sequence LMRLKVKDLRQYLILRNIPI. At Ser-169 the chain carries Phosphoserine. Positions 194 to 253 are disordered; the sequence is QGELMDGDQTSRSGVPAQVQSEITSANTEDDDDDDDEDDDDEEENAEDRNPGLSKERVRA. Residues 201–220 are compositionally biased toward polar residues; that stretch reads DQTSRSGVPAQVQSEITSAN. The span at 221–239 shows a compositional bias: acidic residues; the sequence is TEDDDDDDDEDDDDEEENA. Basic and acidic residues predominate over residues 240–252; that stretch reads EDRNPGLSKERVR. Phosphoserine occurs at positions 254 and 256. One can recognise an SAP 2 domain in the interval 264–278; it reads VEGMSVRQLKEILAR. An RING-type zinc finger spans residues 325-360; sequence CRICMDAVIDCVLLECGHMVTCTKCGKRMSECPICR.

In terms of assembly, interacts with CASP8 and CASP10. Interacts (via RING-type zinc finger) with PPARGC1A. Interacts with NOD1. Interacts with p53/TP53; involved in p53/TP53 ubiquitination. Interacts (via RING-type zinc finger) with MDM2; the interaction stabilizes MDM2. In terms of processing, autoubiquitinated (in vitro). Proteolytically cleaved by caspases upon induction of apoptosis by TNF. Ubiquitous. Detected in heart, brain, liver, skeletal muscle, kidney, pancreas, spleen, thymus, prostate, testis, ovary, colon and leukocytes.

It is found in the cell membrane. It localises to the endomembrane system. Its subcellular location is the nucleus. The protein localises to the nucleus speckle. The protein resides in the cytoplasm. It is found in the cytosol. The catalysed reaction is S-ubiquitinyl-[E2 ubiquitin-conjugating enzyme]-L-cysteine + [acceptor protein]-L-lysine = [E2 ubiquitin-conjugating enzyme]-L-cysteine + N(6)-ubiquitinyl-[acceptor protein]-L-lysine.. The protein operates within protein modification; protein ubiquitination. E3 ubiquitin-protein ligase that regulates several biological processes through the ubiquitin-mediated proteasomal degradation of various target proteins. Ubiquitinates the caspases CASP8 and CASP10, promoting their proteasomal degradation, to negatively regulate cell death downstream of death domain receptors in the extrinsic pathway of apoptosis. May mediate 'Lys-48'-linked polyubiquitination of RIPK1 and its subsequent proteasomal degradation thereby indirectly regulating the tumor necrosis factor-mediated signaling pathway. Negatively regulates p53/TP53 through its direct ubiquitination and targeting to proteasomal degradation. Indirectly, may also negatively regulate p53/TP53 through ubiquitination and degradation of SFN. Mediates PPARGC1A proteasomal degradation probably through ubiquitination thereby indirectly regulating the metabolism of brown fat cells. Possibly involved in innate immunity, through 'Lys-48'-linked polyubiquitination of NOD1 and its subsequent proteasomal degradation. The protein is E3 ubiquitin-protein ligase RNF34 of Homo sapiens (Human).